The following is a 229-amino-acid chain: tRNA pseudouridine synthase B (229 aa).

Catalysis depends on Asp-52, which acts as the Nucleophile.

It belongs to the pseudouridine synthase TruB family. Type 1 subfamily.

It catalyses the reaction uridine(55) in tRNA = pseudouridine(55) in tRNA. Functionally, responsible for synthesis of pseudouridine from uracil-55 in the psi GC loop of transfer RNAs. The protein is tRNA pseudouridine synthase B of Flavobacterium johnsoniae (strain ATCC 17061 / DSM 2064 / JCM 8514 / BCRC 14874 / CCUG 350202 / NBRC 14942 / NCIMB 11054 / UW101) (Cytophaga johnsonae).